The primary structure comprises 185 residues: Elongation factor P (185 aa).

This sequence belongs to the elongation factor P family.

The protein resides in the cytoplasm. It functions in the pathway protein biosynthesis; polypeptide chain elongation. Involved in peptide bond synthesis. Stimulates efficient translation and peptide-bond synthesis on native or reconstituted 70S ribosomes in vitro. Probably functions indirectly by altering the affinity of the ribosome for aminoacyl-tRNA, thus increasing their reactivity as acceptors for peptidyl transferase. The protein is Elongation factor P of Thermotoga petrophila (strain ATCC BAA-488 / DSM 13995 / JCM 10881 / RKU-1).